Here is a 242-residue protein sequence, read N- to C-terminus: Probable transcriptional regulatory protein PXO_01555 (242 aa).

Belongs to the TACO1 family.

It localises to the cytoplasm. The sequence is that of Probable transcriptional regulatory protein PXO_01555 from Xanthomonas oryzae pv. oryzae (strain PXO99A).